A 543-amino-acid chain; its full sequence is CTP synthase (543 aa).

The interval 1–265 (MTRYIFVTGG…DDFVVERFGL (265 aa)) is amidoligase domain. A CTP-binding site is contributed by serine 13. Serine 13 contributes to the UTP binding site. Residues 14-19 (SLGKGI) and aspartate 71 each bind ATP. 2 residues coordinate Mg(2+): aspartate 71 and glutamate 139. CTP is bound by residues 146–148 (DIE), 186–191 (KTKPTQ), and lysine 222. UTP contacts are provided by residues 186–191 (KTKPTQ) and lysine 222. Residues 290–541 (TIAMVGKYME…VKAALAQHQK (252 aa)) enclose the Glutamine amidotransferase type-1 domain. Residue glycine 351 coordinates L-glutamine. Cysteine 378 acts as the Nucleophile; for glutamine hydrolysis in catalysis. L-glutamine contacts are provided by residues 379–382 (LGMQ), glutamate 402, and arginine 469. Catalysis depends on residues histidine 514 and glutamate 516.

It belongs to the CTP synthase family. Homotetramer.

The enzyme catalyses UTP + L-glutamine + ATP + H2O = CTP + L-glutamate + ADP + phosphate + 2 H(+). It catalyses the reaction L-glutamine + H2O = L-glutamate + NH4(+). The catalysed reaction is UTP + NH4(+) + ATP = CTP + ADP + phosphate + 2 H(+). The protein operates within pyrimidine metabolism; CTP biosynthesis via de novo pathway; CTP from UDP: step 2/2. Allosterically activated by GTP, when glutamine is the substrate; GTP has no effect on the reaction when ammonia is the substrate. The allosteric effector GTP functions by stabilizing the protein conformation that binds the tetrahedral intermediate(s) formed during glutamine hydrolysis. Inhibited by the product CTP, via allosteric rather than competitive inhibition. Its function is as follows. Catalyzes the ATP-dependent amination of UTP to CTP with either L-glutamine or ammonia as the source of nitrogen. Regulates intracellular CTP levels through interactions with the four ribonucleotide triphosphates. The chain is CTP synthase from Pseudomonas syringae pv. tomato (strain ATCC BAA-871 / DC3000).